Consider the following 919-residue polypeptide: GPI ethanolamine phosphate transferase 1 (919 aa).

Over 1-9 (MWNKTRTTL) the chain is Cytoplasmic. A helical transmembrane segment spans residues 10–30 (LAVGVLFHLFYLWSIFDIYFI). Residues 31–457 (SPLVHGMSPY…TTYNWRFIRT (427 aa)) are Lumenal-facing. 6 N-linked (GlcNAc...) asparagine glycosylation sites follow: N90, N138, N198, N202, N286, and N312. The chain crosses the membrane as a helical span at residues 458–478 (IVTFGFVGWIFFSFIIFLKSF). Over 479 to 488 (ILENVIDDQK) the chain is Cytoplasmic. The helical transmembrane segment at 489–509 (ASPLSHAVFGSIGILLNWILF) threads the bilayer. Residues 510 to 512 (YQH) lie on the Lumenal side of the membrane. Residues 513 to 533 (SPFNFYMYLLFPLYFWSYIFT) traverse the membrane as a helical segment. The Cytoplasmic portion of the chain corresponds to 534–553 (NRSVLRSGIKEFFKGTSPWK). Residues 554–574 (RVLITISIISVYEGIVYGFFH) traverse the membrane as a helical segment. Residues 575–576 (RW) lie on the Lumenal side of the membrane. The chain crosses the membrane as a helical span at residues 577–597 (TFTLITNILAFYPFICGVREL). Residue S598 is a topological domain, cytoplasmic. The helical transmembrane segment at 599–619 (VNILWIITSVLLSTFTLFDAV) threads the bilayer. At 620–626 (KIEDLNQ) the chain is on the lumenal side. A helical membrane pass occupies residues 627 to 647 (IHLAGLLIILSAFYALYKIHS). Topologically, residues 648–655 (RINSYTRA) are cytoplasmic. The helical transmembrane segment at 656–676 (IFAIQISLVAAMLAVTHRSVI) threads the bilayer. Topologically, residues 677-687 (SLQLRQGLPRE) are lumenal. A helical membrane pass occupies residues 688–708 (SQVAGWIIFFVSLFVMPILHY). Over 709 to 720 (RKPNNDYKVRLL) the chain is Cytoplasmic. A helical membrane pass occupies residues 721 to 741 (IIYLTFAPSFIILTISFESLF). The Lumenal segment spans residues 742 to 776 (YFLFTSYMVQWIEIENKIKEMKTQKDENWLQVLRV). A helical transmembrane segment spans residues 777-797 (SVIGFFLLQVAFFGTGNVASI). The Cytoplasmic segment spans residues 798–807 (SSFSLESVCR). Residues 808 to 828 (LLPIFDPFLMGALLMLKLIIP) form a helical membrane-spanning segment. At 829–848 (YGLLSTCLGILNLKLNFKDY) the chain is on the lumenal side. A helical transmembrane segment spans residues 849-869 (TISSLIISMSDILSLNFFYLL). Residues 870–885 (RTEGSWLDIGITISNY) are Cytoplasmic-facing. Residues 886–906 (CLAILSSLFMLILEVLGHVLL) form a helical membrane-spanning segment. The Lumenal segment spans residues 907–919 (KNVIIQDKTKKTQ).

This sequence belongs to the PIGG/PIGN/PIGO family. PIGN subfamily. As to quaternary structure, interacts with CSF1; CSF1 channels phosphatidylethanolamine to MCD4 in the endoplasmic reticulum at contact sites to support GPI anchor biosynthesis. In terms of processing, N-glycosylated.

It is found in the endoplasmic reticulum membrane. The protein resides in the golgi apparatus membrane. It localises to the vacuole membrane. It functions in the pathway glycolipid biosynthesis; glycosylphosphatidylinositol-anchor biosynthesis. Its function is as follows. Ethanolamine phosphate transferase involved in glycosylphosphatidylinositol-anchor biosynthesis. Transfers ethanolamine phosphate to the first alpha-1,4-linked mannose of the glycosylphosphatidylinositol precursor of GPI-anchor. Ethanolamine phosphate on the alpha-1,4-linked mannose is essential for further mannosylation by GPI10 and is necessary for an efficient recognition of GPI lipids and GPI proteins by the GPI transamidase, for the efficient transport of GPI anchored proteins from endoplasmic reticulum to Golgi and for the physiological incorporation of ceramides into GPI anchors by lipid remodeling. Also involved in non-mitochondrial ATP movements across membrane and participates in Golgi and endoplasmic reticulum function, Also required for the incorporation of BGL2 into the cell wall. The polypeptide is GPI ethanolamine phosphate transferase 1 (MCD4) (Saccharomyces cerevisiae (strain ATCC 204508 / S288c) (Baker's yeast)).